We begin with the raw amino-acid sequence, 223 residues long: Noggin (223 aa).

Residues 1–26 (MDPPRLRVATYLLLLSVGLLLHGGAC) form the signal peptide. An N-linked (GlcNAc...) asparagine glycan is attached at Asn-61. 4 disulfide bridges follow: Cys-143-Cys-180, Cys-166-Cys-217, Cys-172-Cys-219, and Cys-195-Cys-204.

The protein belongs to the noggin family. In terms of assembly, homodimer.

Its subcellular location is the secreted. In terms of biological role, inhibitor of bone morphogenetic proteins (BMP) signaling. The polypeptide is Noggin (nog) (Takifugu rubripes (Japanese pufferfish)).